A 301-amino-acid polypeptide reads, in one-letter code: Possible hemolysin C (301 aa).

2 consecutive CBS domains span residues 80 to 142 (MVPR…NGRL) and 145 to 202 (LIRK…IDDE).

It belongs to the UPF0053 family. Hemolysin C subfamily.

The polypeptide is Possible hemolysin C (tlyC) (Rickettsia akari (strain Hartford)).